A 1469-amino-acid chain; its full sequence is ABC transporter G family member 36 (1469 aa).

Position 1 is an N-acetylmethionine (Met-1). Residues Ser-37, Ser-38, and Ser-40 each carry the phosphoserine modification. A Phosphothreonine modification is found at Thr-43. Ser-45 carries the phosphoserine modification. An ABC transporter 1 domain is found at 171–444; the sequence is LGMIGIQFAK…FESFGFKCPE (274 aa). An ATP-binding site is contributed by 204–211; it reads GPPSSGKT. The ABC transmembrane type-2 1 domain occupies 522 to 735; it reads ELLKSCWDKE…AFNGLVVNEM (214 aa). 7 helical membrane-spanning segments follow: residues 540–560, 575–595, 621–641, 659–679, 685–705, 713–733, and 772–792; these read FFYVFKTVQIVIIAAITSTLF, LYIGALLFGMIINMFNGFAEM, LPTFLLGIPSSILESTAWMVV, FLLVFLIQQMAASLFRLIASV, IANTGGALTLLLVFLLGGFLL, WWGWAYWVSPLTYAFNGLVVN, and ISVGALLCFTALFNILFTLAL. The disordered stretch occupies residues 806-852; it reads PEEENEDADQGKDPMRRSLSTADGNRRGEVAMGRMSRDSAAEASGGA. Phosphoserine is present on residues Ser-825, Ser-841, and Ser-844. A compositionally biased stretch (basic and acidic residues) spans 829–845; sequence GNRRGEVAMGRMSRDSA. One can recognise an ABC transporter 2 domain in the interval 867 to 1119; it reads MSFDDVKYFV…KVVEYFESFP (253 aa). Position 912–919 (912–919) interacts with ATP; that stretch reads GVSGAGKT. Residues 1192-1406 form the ABC transmembrane type-2 2 domain; the sequence is GQFKSCLWKQ…TVYGLIVSQY (215 aa). 7 helical membrane passes run 1216–1236, 1239–1259, 1299–1319, 1326–1346, 1356–1376, 1384–1404, and 1441–1461; these read FIFTLATSLLIGTVFWQIGGN, NAGDLTMVIGALYAAIIFVGI, LPYVLIQTVYYSLIVYAMVGF, FFWFVFVSYFSFLYWTYYGMM, VASIFASAFYGIFNLFSGFFI, WWIWYYWICPVAWTVYGLIVS, and PVAAVLIAFTVFFAFIFAFCI.

This sequence belongs to the ABC transporter superfamily. ABCG family. PDR (TC 3.A.1.205) subfamily. Interacts, in a Ca(2+)-dependent manner, with calmodulins CaM3, CaM7 and several CaM-like proteins (CML8, CML9, CML12/CAL4, CML37 and CML38), as well as with calcium regulated proteins CBL4/SOS3 and KIC. Phosphorylated upon perception of pathogen-associated molecular patterns (PAMPs); phosphorylations at Ser-40 and Ser-45, which likely regulate transport activity, are required for plant defense against pathogens (e.g. Blumeria graminis), but dispensable for recruitment to the host-pathogen interface and penetration sites. Phosphorylation at Ser-841 seems to be required for protein stability. As to expression, ubiquitous (at protein level). Higher levels in root hairs, stomata, epidermal cells, and hydathodes. Concentrated at the infection site of infected plants, including papillae and haustoria. Accumulates at the periphery of lateral root cap and root epidermal cells, especially in the outer lateral membrane domain facing the environment.

The protein localises to the cell membrane. It is found in the golgi apparatus. Its subcellular location is the trans-Golgi network membrane. The protein resides in the endoplasmic reticulum membrane. In terms of biological role, together with ABCG37, regulates auxin homeostasis and responses by playing a dual role in coumarin (e.g. esculin) and in the auxin precursor indole 3-butyric acid (IBA) efflux transport, thus influencing cotyledons, roots and root hairs development. Mediates the transport (export into the apoplast) of distinct indole-type metabolites in distinct biological processes; a precursor of 4-O-beta-D-glucosyl-indol-3-yl formamide (4OGlcI3F), a pathogen-inducible tryptophan-derived compound (e.g. upon Blumeria graminis conidiospore inoculation), being a probable substrate in extracellular pathogen defense. Involved in the cellular detoxification of xenobiotics by promoting the excretion of some auxinic herbicides including 4-(2,4-dichlorophenoxy)butyric acid (2,4-DB) and other members of the phenoxyalkanoic acid family but not 2,4-dichlorophenoxyacetic acid (2,4-D). Mediates thymidine exudation in the rhizosphere. May be a transporter of lignin precursors during tracheary element differentiation. Key factor that controls the extent of cell death in the defense response. Necessary for both callose deposition and glucosinolate activation in response to pathogens. As a central component of nonhost resistance (NHR), required for limiting invasion by nonadapted pathogens including powdery mildews (e.g. Blumeria graminis and Erysiphe pisi), root-penetrating pathogenic fungi (e.g. Fusarium oxysporum), Phakopsora pachyrhizi and Colletotrichum gloeosporioides (anthracnose fungi), probably by sensing Ca(2+) via interactions with calmodulins (e.g. CaM7). Confers resistance to cadmium (Cd) and lead (Pb), probably as an efflux pump of Cd2+ or Cd conjugates, and possibly, of chemicals that mediate pathogen resistance. Promotes resistance to abiotic stresses (e.g. drought and salt stress) and favors general growth by preventing sodium accumulation in plants. Required for microbe-associated molecular patterns (MAMPs)- and salicylic acid (SA)-dependent hypersensitive cell death (HR), involving indole glucosinolate breakdown products (e.g. indole-3-acetonitrile), probably in a PEN2 myrosinase-dependent metabolic pathway, triggered by the recognition of effectors from incompatible pathogens including oomycetes and bacteria (e.g. AvrRpm1 and AvrRps4) and benzothiadiazole- (BTH), and leading to an induced protection against pathogens (e.g. Pseudomonas syringae pv. tomato DC3000, Golovinomyces orontii and Hyaloperonospora arabidopsidis). The protein is ABC transporter G family member 36 of Arabidopsis thaliana (Mouse-ear cress).